The primary structure comprises 141 residues: Nucleoside diphosphate kinase (141 aa).

ATP is bound by residues K11, F59, R87, T93, R104, and N114. The active-site Pros-phosphohistidine intermediate is the H117.

It belongs to the NDK family. Homotetramer. Requires Mg(2+) as cofactor.

It is found in the cytoplasm. It carries out the reaction a 2'-deoxyribonucleoside 5'-diphosphate + ATP = a 2'-deoxyribonucleoside 5'-triphosphate + ADP. The catalysed reaction is a ribonucleoside 5'-diphosphate + ATP = a ribonucleoside 5'-triphosphate + ADP. In terms of biological role, major role in the synthesis of nucleoside triphosphates other than ATP. The ATP gamma phosphate is transferred to the NDP beta phosphate via a ping-pong mechanism, using a phosphorylated active-site intermediate. The polypeptide is Nucleoside diphosphate kinase (Paraburkholderia xenovorans (strain LB400)).